Reading from the N-terminus, the 126-residue chain is Probable 4-amino-4-deoxy-L-arabinose-phosphoundecaprenol flippase subunit ArnF (126 aa).

Residues 1–21 traverse the membrane as a helical segment; sequence MGFFWALLSVGLVSAAQLLLR. Residues 22-47 lie on the Periplasmic side of the membrane; sequence SAMVALPPLTDIVAFLQHLLHFQPGT. The chain crosses the membrane as a helical span at residues 48 to 68; sequence FGLFFGLLGYLLSMVCWYFAL. The Cytoplasmic segment spans residues 69–76; sequence HRLPLSKA. The helical transmembrane segment at 77-97 threads the bilayer; it reads YALLSLSYILVWAAAIWLPGW. Over 98–100 the chain is Periplasmic; it reads HEP. The chain crosses the membrane as a helical span at residues 101-121; that stretch reads FYWQSLLGVAIIVAGVLTIFW. Residues 122 to 126 lie on the Cytoplasmic side of the membrane; sequence PVKRR.

This sequence belongs to the ArnF family. As to quaternary structure, heterodimer of ArnE and ArnF.

The protein localises to the cell inner membrane. It participates in bacterial outer membrane biogenesis; lipopolysaccharide biosynthesis. In terms of biological role, translocates 4-amino-4-deoxy-L-arabinose-phosphoundecaprenol (alpha-L-Ara4N-phosphoundecaprenol) from the cytoplasmic to the periplasmic side of the inner membrane. The polypeptide is Probable 4-amino-4-deoxy-L-arabinose-phosphoundecaprenol flippase subunit ArnF (Klebsiella pneumoniae subsp. pneumoniae (strain ATCC 700721 / MGH 78578)).